The primary structure comprises 703 residues: MARTTPIELYRNIGIVAHVDAGKTTTTERILFYTGVNHKMGEVHDGAATMDWMAQEQERGITITSAATTAFWQGSTKQFAHKYRFNIIDTPGHVDFTIEVERSLRVLDGAVVVFSGADGVEPQSETVWRQANKYHVPRLAYINKMDRQGADFLRVVKQIDQRLGHHPVPIQLAIGSEENFMGQIDLVKMKAIYWNDADQGTSYREEEIPAELKALADEWRAHMIEAAAEANDELTMKFLDGEELSIEEIKAGLRQRTIANEIVPTILGSSFKNKGVPLMLDAVIDYLPAPSEIPAIRGTDPDDEEKHLERHADDKEPFSALAFKIATDPFVGTLTFARVYSGVLSSGNAVLNSVKGKKERIGRMVQMHANQRAEIKDVCAGDIAALIGMKDVTTGDTLCDMDKPIILERMDFPDPVISVAVEPKTKADQEKMGIALGKLAQEDPSFRVRTDEETGQTIISGMGELHLDIIVDRMRREFNVEANIGKPQVAYREKIRNTCEIEGRFVRQSGGRGQYGHCWIRFAPGDEGKEGLEFINEIVGGVVPREYIPAIQKGIEEQMKNGVLAGYPLINLKAAVFDGSYHDVDSNEMAYKIAASMATKQLSQKGGAVLLEPVMKVEVVTPEEYQGDILGDLSRRRGMIQDGDETPAGKVIRAEVPLGEMFGYATSMRSMTQGRASFSMEFTRYAEAPASIADGIVKKSRGE.

Positions 8–291 constitute a tr-type G domain; that stretch reads ELYRNIGIVA…AVIDYLPAPS (284 aa). GTP is bound by residues 17–24, 89–93, and 143–146; these read AHVDAGKT, DTPGH, and NKMD.

It belongs to the TRAFAC class translation factor GTPase superfamily. Classic translation factor GTPase family. EF-G/EF-2 subfamily.

It localises to the cytoplasm. Catalyzes the GTP-dependent ribosomal translocation step during translation elongation. During this step, the ribosome changes from the pre-translocational (PRE) to the post-translocational (POST) state as the newly formed A-site-bound peptidyl-tRNA and P-site-bound deacylated tRNA move to the P and E sites, respectively. Catalyzes the coordinated movement of the two tRNA molecules, the mRNA and conformational changes in the ribosome. This is Elongation factor G 2 (fusB) from Pseudomonas putida (strain ATCC 47054 / DSM 6125 / CFBP 8728 / NCIMB 11950 / KT2440).